A 117-amino-acid polypeptide reads, in one-letter code: Membrane-anchored ubiquitin-fold protein 1 (117 aa).

The Ubiquitin-like domain occupies 8-74 (LEIKFRLTDG…LENSKTVKDY (67 aa)). Cys-112 carries S-palmitoyl cysteine lipidation. Cys-114 carries the post-translational modification Cysteine methyl ester. A lipid anchor (S-farnesyl cysteine) is attached at Cys-114. Positions 115–117 (SVM) are cleaved as a propeptide — removed in mature form.

The protein localises to the cell membrane. In terms of biological role, may serve as docking site to facilitate the association of other proteins to the plasma membrane. The chain is Membrane-anchored ubiquitin-fold protein 1 (MUB1) from Arabidopsis thaliana (Mouse-ear cress).